Here is a 218-residue protein sequence, read N- to C-terminus: Peptidase E (218 aa).

Catalysis depends on charge relay system residues Ser-123, Asp-138, and His-160.

Belongs to the peptidase S51 family.

It localises to the cytoplasm. The catalysed reaction is Dipeptidase E catalyzes the hydrolysis of dipeptides Asp-|-Xaa. It does not act on peptides with N-terminal Glu, Asn or Gln, nor does it cleave isoaspartyl peptides.. Functionally, hydrolyzes dipeptides containing N-terminal aspartate residues. May play a role in allowing the cell to use peptide aspartate to spare carbon otherwise required for the synthesis of the aspartate family of amino acids. The polypeptide is Peptidase E (Haemophilus influenzae (strain ATCC 51907 / DSM 11121 / KW20 / Rd)).